The chain runs to 479 residues: Pup--protein ligase (479 aa).

Glu-17 is a Mg(2+) binding site. An ATP-binding site is contributed by Arg-62. Tyr-64 contacts Mg(2+). The active-site Proton acceptor is Asp-66. Position 72 (Glu-72) interacts with Mg(2+). ATP is bound by residues Ser-75 and Trp-432.

It belongs to the Pup ligase/Pup deamidase family. Pup-conjugating enzyme subfamily.

The enzyme catalyses ATP + [prokaryotic ubiquitin-like protein]-L-glutamate + [protein]-L-lysine = ADP + phosphate + N(6)-([prokaryotic ubiquitin-like protein]-gamma-L-glutamyl)-[protein]-L-lysine.. Its pathway is protein degradation; proteasomal Pup-dependent pathway. The protein operates within protein modification; protein pupylation. Catalyzes the covalent attachment of the prokaryotic ubiquitin-like protein modifier Pup to the proteasomal substrate proteins, thereby targeting them for proteasomal degradation. This tagging system is termed pupylation. The ligation reaction involves the side-chain carboxylate of the C-terminal glutamate of Pup and the side-chain amino group of a substrate lysine. This is Pup--protein ligase from Corynebacterium diphtheriae (strain ATCC 700971 / NCTC 13129 / Biotype gravis).